The following is a 241-amino-acid chain: 6-hydroxymethyl-7,8-dihydropterin pyrophosphokinase (241 aa).

Belongs to the archaeal 6-HMPDK family. Mg(2+) serves as cofactor.

The catalysed reaction is 6-hydroxymethyl-7,8-dihydropterin + ATP = (7,8-dihydropterin-6-yl)methyl diphosphate + AMP + H(+). It participates in cofactor biosynthesis; 5,6,7,8-tetrahydromethanopterin biosynthesis. Catalyzes the transfer of diphosphate from ATP to 6-hydroxymethyl-7,8-dihydropterin (6-HMD), leading to 6-hydroxymethyl-7,8-dihydropterin diphosphate (6-HMDP). This Methanocaldococcus jannaschii (strain ATCC 43067 / DSM 2661 / JAL-1 / JCM 10045 / NBRC 100440) (Methanococcus jannaschii) protein is 6-hydroxymethyl-7,8-dihydropterin pyrophosphokinase.